A 164-amino-acid polypeptide reads, in one-letter code: UPF0478 protein SSP1024 (164 aa).

The helical transmembrane segment at 7-27 (IAGIIAAVAFLILVIGIVVVL) threads the bilayer. The segment at 136–164 (RNRRDSANYKTSSVANETNHSYTTRVDNK) is disordered. Residues 143–164 (NYKTSSVANETNHSYTTRVDNK) are compositionally biased toward polar residues.

It belongs to the UPF0478 family.

It is found in the cell membrane. This Staphylococcus saprophyticus subsp. saprophyticus (strain ATCC 15305 / DSM 20229 / NCIMB 8711 / NCTC 7292 / S-41) protein is UPF0478 protein SSP1024.